The sequence spans 469 residues: Argininosuccinate lyase (469 aa).

This sequence belongs to the lyase 1 family. Argininosuccinate lyase subfamily.

The protein localises to the cytoplasm. It carries out the reaction 2-(N(omega)-L-arginino)succinate = fumarate + L-arginine. It functions in the pathway amino-acid biosynthesis; L-arginine biosynthesis; L-arginine from L-ornithine and carbamoyl phosphate: step 3/3. This chain is Argininosuccinate lyase, found in Mycolicibacterium smegmatis (strain ATCC 700084 / mc(2)155) (Mycobacterium smegmatis).